Reading from the N-terminus, the 71-residue chain is Small ribosomal subunit protein bS21 (71 aa).

A compositionally biased stretch (basic residues) spans 48–60 (KKAAAVKRYKKKL). Positions 48–71 (KKAAAVKRYKKKLQRESIRTTRMY) are disordered. Residues 61-71 (QRESIRTTRMY) show a composition bias toward basic and acidic residues.

It belongs to the bacterial ribosomal protein bS21 family.

This is Small ribosomal subunit protein bS21 from Psychrobacter sp. (strain PRwf-1).